The following is a 440-amino-acid chain: Alpha-methylserine aldolase (440 aa).

Lys255 carries the post-translational modification N6-(pyridoxal phosphate)lysine.

The protein belongs to the SHMT family. Alpha-methylserine aldolase subfamily. As to quaternary structure, homodimer. It depends on pyridoxal 5'-phosphate as a cofactor.

The enzyme catalyses 2-methyl-L-serine = formaldehyde + L-alanine. The catalysed reaction is 2-ethyl-L-serine = (2S)-2-aminobutanoate + formaldehyde. In the alpha-methyl-L-serine synthesis reaction, activity is inhibited by an excess amount of formaldehyde (at a concentration greater than 4 mM). Formaldehyde release activity is reduced by the sulfhydryl reagent N-ethylmaleimide, iodoacetate amide and iodoacetic acid, but not by dithiothreitol and 2-mercaptoethanol. Activity is enhanced by 1 mM of manganese chloride. Catalyzes the reversible interconversion of alpha-methyl-L-serine to L-alanine and formaldehyde. Can also catalyze the synthesis of alpha-ethyl-L-serine from L-2-aminobutyric acid and formaldehyde. Also shows low alanine racemase activity. Cannot use alpha-methyl-D-serine, L-serine, D-serine, (S)-2-amino-1-propanol, (R)-2-amino-1-propanol, (S)-alpha-hydroxymethyltyrosine, (R)-alpha-hydroxymethyltyrosine, alpha-iso-butyl-DL-serine, alpha-iso-propyl-DL-serine or alpha-benzyl-DL-serine. Cannot use D-alanine instead of L-alanine as the substrate for alpha-methyl-L-serine synthesis. Does not require tetrahydrofolate (THF) for activity. The polypeptide is Alpha-methylserine aldolase (Variovorax paradoxus).